The sequence spans 433 residues: MTSTVESLSSVKKKISFEIPAERVSAEIEKVFGQIQKRAAIKGFRKGKVPRSLVEQNYRSMMESDVLKNLFDETYFKALADHKIFPVSHPHIESDEVKRGEALKYSATVEVFPEIDVKDYKGLEVKRERFVSDVAPVEARLNEMREGMAELKPLEEGKCAETGNFVVIDFVGSVDGIPFEGGAAESYQLELGSGRFIPGFEDQLVGVKAGEQRTVEVTFPEEYGNKDLAGKAASFAVTVKEAKVKELPELDDEFAMQFGEFETLEQLKTKLAELHKDQETARIKADVQDRIVKALIGNNEIEVPSTLVERQLQMMLSNMKNRLAQQRLSLEMMGMDDESFKTHYRDSAESQVKGSLLLEAVAKKEGITVNDPDVEAKLRAMAEEAGQDFDRVKDFYEQNHNAKENLVAHLNEEKVLGYLLENAVVTEVAKDEL.

Residues 163–248 (GNFVVIDFVG…VKEAKVKELP (86 aa)) form the PPIase FKBP-type domain.

This sequence belongs to the FKBP-type PPIase family. Tig subfamily.

Its subcellular location is the cytoplasm. The catalysed reaction is [protein]-peptidylproline (omega=180) = [protein]-peptidylproline (omega=0). Involved in protein export. Acts as a chaperone by maintaining the newly synthesized protein in an open conformation. Functions as a peptidyl-prolyl cis-trans isomerase. The protein is Trigger factor of Geobacter metallireducens (strain ATCC 53774 / DSM 7210 / GS-15).